The following is a 541-amino-acid chain: MAAVIRIRAMAAGTRLRVLNCGLGTTIRSLCSQPVSVNERIENKRHAALLGGGQRRIDAQHKRGKLTARERISLLLDPGSFLESDMFVEHRCADFGMAAEKNKFPGDSVVTGRGRINGRLVYVFSQDFTVFGGSLSGAHAQKICKIMDQAITVGAPVIGLNDSGGARIQEGVESLAGYADIFLRNVTASGVIPQISLIMGPCAGGAVYSPALTDFTFMVKDTSYLFITGPEFVKSVTNEDVTQEQLGGAKTHTTVSGVAHRAFDNDVDALCNLREFLNFLPLSNQDPASIRECHDPSDRLVPELDTVVPLESSKAYNMLDIIHAVIDEREFFEIMPNYAKNIVIGFARMNGRTVGIVGNQPNVASGCLDINSSVKGARFVRFCDAFSIPLITFVDVPGFLPGTAQEYGGIIRHGAKLLYAFAEATVPKITVITRKAYGGAYDVMSSKHLLGDTNYAWPTAEIAVMGAKGAVEIIFKGHEDVEAAQAEYVEKFANPFPAAVRGFVDDIIQPSSTRARICCDLEVLASKKVHRPWRKHANVPL.

The transit peptide at 1–28 directs the protein to the mitochondrion; that stretch reads MAAVIRIRAMAAGTRLRVLNCGLGTTIR. The CoA carboxyltransferase N-terminal domain maps to 34-292; sequence PVSVNERIEN…SNQDPASIRE (259 aa). The carboxyltransferase stretch occupies residues 34 to 535; the sequence is PVSVNERIEN…SKKVHRPWRK (502 aa). The residue at position 73 (S73) is a Phosphoserine. N6-acetyllysine; alternate is present on K101. An N6-succinyllysine; alternate modification is found at K101. N6-succinyllysine is present on K250. Positions 296–535 constitute a CoA carboxyltransferase C-terminal domain; the sequence is PSDRLVPELD…SKKVHRPWRK (240 aa). Residues 327–360 are acyl-CoA binding; the sequence is DEREFFEIMPNYAKNIVIGFARMNGRTVGIVGNQ. N6-acetyllysine; alternate is present on residues K476 and K491. N6-succinyllysine; alternate is present on residues K476 and K491.

This sequence belongs to the AccD/PCCB family. In terms of assembly, the holoenzyme is a dodecamer composed of 6 PCCA/alpha subunits and 6 PCCB/beta subunits.

The protein resides in the mitochondrion matrix. It catalyses the reaction propanoyl-CoA + hydrogencarbonate + ATP = (S)-methylmalonyl-CoA + ADP + phosphate + H(+). The enzyme catalyses butanoyl-CoA + hydrogencarbonate + ATP = (2S)-ethylmalonyl-CoA + ADP + phosphate + H(+). The protein operates within metabolic intermediate metabolism; propanoyl-CoA degradation; succinyl-CoA from propanoyl-CoA: step 1/3. Its function is as follows. This is one of the 2 subunits of the biotin-dependent propionyl-CoA carboxylase (PCC), a mitochondrial enzyme involved in the catabolism of odd chain fatty acids, branched-chain amino acids isoleucine, threonine, methionine, and valine and other metabolites. Propionyl-CoA carboxylase catalyzes the carboxylation of propionyl-CoA/propanoyl-CoA to D-methylmalonyl-CoA/(S)-methylmalonyl-CoA. Within the holoenzyme, the alpha subunit catalyzes the ATP-dependent carboxylation of the biotin carried by the biotin carboxyl carrier (BCC) domain, while the beta subunit then transfers the carboxyl group from carboxylated biotin to propionyl-CoA. Propionyl-CoA carboxylase also significantly acts on butyryl-CoA/butanoyl-CoA, which is converted to ethylmalonyl-CoA/(2S)-ethylmalonyl-CoA. Other alternative minor substrates include (2E)-butenoyl-CoA/crotonoyl-CoA. This chain is Propionyl-CoA carboxylase beta chain, mitochondrial, found in Rattus norvegicus (Rat).